The following is a 358-amino-acid chain: UPF0283 membrane protein PM0909 (358 aa).

Transmembrane regions (helical) follow at residues leucine 62–valine 82, tryptophan 90–leucine 110, and alanine 213–leucine 233.

This sequence belongs to the UPF0283 family.

It localises to the cell inner membrane. In Pasteurella multocida (strain Pm70), this protein is UPF0283 membrane protein PM0909.